A 493-amino-acid polypeptide reads, in one-letter code: Na(+)/H(+) antiporter subunit D (493 aa).

The next 15 membrane-spanning stretches (helical) occupy residues 3–23 (NFVI…IFMT), 31–51 (IFST…VQTV), 77–97 (FASL…LYSF), 107–127 (SFYY…FLTG), 129–149 (LFNM…LIVL), 163–183 (IVFN…LYAV), 203–223 (GLIT…GGIF), 227–247 (FWLP…FGAL), 251–271 (VGLY…TAFT), 274–294 (LMIW…LAYS), 299–319 (IVIY…AVHT), 330–350 (LIHD…LIAL), 370–390 (GWMF…SGFV), 407–427 (ISML…RIFI), and 449–469 (LYPA…TEWV).

The protein belongs to the CPA3 antiporters (TC 2.A.63) subunit D family. Forms a heterooligomeric complex that consists of seven subunits: MrpA, MrpB, MrpC, MrpD, MrpE, MrpF and MrpG.

The protein localises to the cell membrane. Functionally, mrp complex is a Na(+)/H(+) antiporter that is considered to be the major Na(+) excretion system in B.subtilis. Has a major role in Na(+) resistance and a minor role in Na(+)- and K(+)-dependent pH homeostasis as compared to TetB. MrpA may be the actual Na(+)/H(+) antiporter, although the six other Mrp proteins are all required for Na(+)/H(+) antiport activity and Na(+) resistance. MrpA is required for initiation of sporulation when external Na(+) concentration increases. Also transports Li(+) but not K(+), Ca(2+) or Mg(2+). The sequence is that of Na(+)/H(+) antiporter subunit D (mrpD) from Bacillus subtilis (strain 168).